Here is a 100-residue protein sequence, read N- to C-terminus: MGCCGCGSCGGCGGGCGGCGGGCGGGCGGGCGGVCGSCTTCRCYRVGCCSSCCPCCRGCCGGCCSTPVICCCRRTCRSCGCGCRKGCCQQKCCCQKQCCC.

The tract at residues 4–82 is 13 X 2 AA repeats of CG; it reads CGCGSCGGCG…RRTCRSCGCG (79 aa).

It belongs to the KRTAP type 28 family.

Its function is as follows. In the hair cortex, hair keratin intermediate filaments are embedded in an interfilamentous matrix, consisting of hair keratin-associated proteins (KRTAP), which are essential for the formation of a rigid and resistant hair shaft through their extensive disulfide bond cross-linking with abundant cysteine residues of hair keratins. The matrix proteins include the high-sulfur and high-glycine-tyrosine keratins. The chain is Small cysteine and glycine repeat-containing protein 3 from Homo sapiens (Human).